The chain runs to 148 residues: Ribonuclease pancreatic (148 aa).

Residues 1-25 (MGLEKSLMLFPLLVLVLGLVQPSLG) form the signal peptide. 2 residues coordinate substrate: Lys32 and Arg35. His37 serves as the catalytic Proton acceptor. Intrachain disulfides connect Cys50/Cys108, Cys64/Cys119, Cys82/Cys134, and Cys89/Cys96. Substrate contacts are provided by residues 65–69 (KPVNT), Lys90, and Arg109. His143 serves as the catalytic Proton donor.

This sequence belongs to the pancreatic ribonuclease family. Monomer. Interacts with and forms tight 1:1 complexes with RNH1. Dimerization of two such complexes may occur. Interaction with RNH1 inhibits this protein. As to expression, pancreas.

The protein resides in the secreted. The catalysed reaction is an [RNA] containing cytidine + H2O = an [RNA]-3'-cytidine-3'-phosphate + a 5'-hydroxy-ribonucleotide-3'-[RNA].. It carries out the reaction an [RNA] containing uridine + H2O = an [RNA]-3'-uridine-3'-phosphate + a 5'-hydroxy-ribonucleotide-3'-[RNA].. In terms of biological role, endonuclease that catalyzes the cleavage of RNA on the 3' side of pyrimidine nucleotides. Acts on single-stranded and double-stranded RNA. In Gerbilliscus gambianus (Gambian gerbil), this protein is Ribonuclease pancreatic (RNASE1).